Reading from the N-terminus, the 1204-residue chain is ATP-dependent helicase/nuclease subunit A (1204 aa).

Residues 2–469 (TKFTKEQNQA…IVLSDNFRST (468 aa)) form the UvrD-like helicase ATP-binding domain. An ATP-binding site is contributed by 23–30 (ASAGSGKT). A UvrD-like helicase C-terminal domain is found at 496–784 (EGQLQFGATY…KLMTIHASKG (289 aa)).

The protein belongs to the helicase family. AddA subfamily. As to quaternary structure, heterodimer of AddA and AddB/RexB. Mg(2+) serves as cofactor.

It catalyses the reaction Couples ATP hydrolysis with the unwinding of duplex DNA by translocating in the 3'-5' direction.. It carries out the reaction ATP + H2O = ADP + phosphate + H(+). Its function is as follows. The heterodimer acts as both an ATP-dependent DNA helicase and an ATP-dependent, dual-direction single-stranded exonuclease. Recognizes the chi site generating a DNA molecule suitable for the initiation of homologous recombination. The AddA nuclease domain is required for chi fragment generation; this subunit has the helicase and 3' -&gt; 5' nuclease activities. The polypeptide is ATP-dependent helicase/nuclease subunit A (Lactobacillus johnsonii (strain CNCM I-12250 / La1 / NCC 533)).